The sequence spans 79 residues: Acyl carrier protein (79 aa).

Residues 2-77 enclose the Carrier domain; the sequence is DNIEQRVKKI…QAIDYARANV (76 aa). An O-(pantetheine 4'-phosphoryl)serine modification is found at Ser37.

Belongs to the acyl carrier protein (ACP) family. 4'-phosphopantetheine is transferred from CoA to a specific serine of apo-ACP by AcpS. This modification is essential for activity because fatty acids are bound in thioester linkage to the sulfhydryl of the prosthetic group.

It is found in the cytoplasm. The protein operates within lipid metabolism; fatty acid biosynthesis. Its function is as follows. Carrier of the growing fatty acid chain in fatty acid biosynthesis. In Burkholderia cenocepacia (strain HI2424), this protein is Acyl carrier protein.